The primary structure comprises 239 residues: MVIKAQSPAGFAEEYIIESIWNNRFPPGSILPAERELSELIGVTRTTLREVLQRLARDGWLTIQHGKPTKVNNFWETSGLNILETLARLDHDSVPQLIDNLLSVRTNISTIFIRTAFRQHPDKALAVLDSAREVEDHADAFAELDYNIFRGLAFASGNPIYGLILNGMKGLYTRIGRHYFSSPEARSLALGFYHQLAKVCEAGLHDQVYELVRRYGHDSGEIWHRMQKSLPGDLAMNMR.

In terms of domain architecture, HTH gntR-type spans Gln6–Phe74. Residues Glu34–Gln53 constitute a DNA-binding region (H-T-H motif).

As to quaternary structure, homodimer.

The protein localises to the cytoplasm. In terms of biological role, multifunctional regulator of fatty acid metabolism. This is Fatty acid metabolism regulator protein from Klebsiella pneumoniae subsp. pneumoniae (strain ATCC 700721 / MGH 78578).